The following is a 130-amino-acid chain: MARVTVEDCIDKVDNRFDLVLLAAHRARMISSGSQLTIDRDNDKNPVVSLREIAEETISPEDLREELVHSLQKFVEVDEPEPDTVPLIGSAGASVDADDTEVAPERMTEEELLKGLEGLAPPEEQPEEDE.

The segment at 80–130 (PEPDTVPLIGSAGASVDADDTEVAPERMTEEELLKGLEGLAPPEEQPEEDE) is disordered. Positions 103–114 (APERMTEEELLK) are enriched in basic and acidic residues.

Belongs to the RNA polymerase subunit omega family. In terms of assembly, the RNAP catalytic core consists of 2 alpha, 1 beta, 1 beta' and 1 omega subunit. When a sigma factor is associated with the core the holoenzyme is formed, which can initiate transcription.

It catalyses the reaction RNA(n) + a ribonucleoside 5'-triphosphate = RNA(n+1) + diphosphate. In terms of biological role, promotes RNA polymerase assembly. Latches the N- and C-terminal regions of the beta' subunit thereby facilitating its interaction with the beta and alpha subunits. The chain is DNA-directed RNA polymerase subunit omega from Rhodopseudomonas palustris (strain BisB18).